The chain runs to 436 residues: 3-phosphoshikimate 1-carboxyvinyltransferase (436 aa).

K22, S23, and R27 together coordinate 3-phosphoshikimate. A phosphoenolpyruvate-binding site is contributed by K22. 2 residues coordinate phosphoenolpyruvate: G95 and R123. 3-phosphoshikimate contacts are provided by S170, S171, Q172, S201, D322, and K349. Q172 contributes to the phosphoenolpyruvate binding site. D322 serves as the catalytic Proton acceptor. Residues R353, R397, and K422 each coordinate phosphoenolpyruvate.

This sequence belongs to the EPSP synthase family. In terms of assembly, monomer.

The protein localises to the cytoplasm. It carries out the reaction 3-phosphoshikimate + phosphoenolpyruvate = 5-O-(1-carboxyvinyl)-3-phosphoshikimate + phosphate. It functions in the pathway metabolic intermediate biosynthesis; chorismate biosynthesis; chorismate from D-erythrose 4-phosphate and phosphoenolpyruvate: step 6/7. Catalyzes the transfer of the enolpyruvyl moiety of phosphoenolpyruvate (PEP) to the 5-hydroxyl of shikimate-3-phosphate (S3P) to produce enolpyruvyl shikimate-3-phosphate and inorganic phosphate. The protein is 3-phosphoshikimate 1-carboxyvinyltransferase of Ralstonia nicotianae (strain ATCC BAA-1114 / GMI1000) (Ralstonia solanacearum).